We begin with the raw amino-acid sequence, 168 residues long: Lipoprotein signal peptidase (168 aa).

A run of 4 helical transmembrane segments spans residues 15 to 35 (WLWL…IVME), 47 to 67 (VLPF…SFLS), 75 to 95 (WLFT…MSKL), and 107 to 127 (AMII…GFVV). Catalysis depends on residues aspartate 128 and aspartate 146. A helical membrane pass occupies residues 141–161 (AFNLADTAICLGAAMIILDGF).

Belongs to the peptidase A8 family.

Its subcellular location is the cell inner membrane. The enzyme catalyses Release of signal peptides from bacterial membrane prolipoproteins. Hydrolyzes -Xaa-Yaa-Zaa-|-(S,diacylglyceryl)Cys-, in which Xaa is hydrophobic (preferably Leu), and Yaa (Ala or Ser) and Zaa (Gly or Ala) have small, neutral side chains.. It functions in the pathway protein modification; lipoprotein biosynthesis (signal peptide cleavage). Its function is as follows. This protein specifically catalyzes the removal of signal peptides from prolipoproteins. The chain is Lipoprotein signal peptidase from Vibrio vulnificus (strain CMCP6).